The chain runs to 423 residues: Cytochrome c biogenesis protein Ccs1 (423 aa).

3 helical membrane-spanning segments follow: residues 11–31, 70–90, and 153–173; these read LKFA…GSII, NFWF…CTFF, and IAPV…IFAS.

It belongs to the Ccs1/CcsB family. As to quaternary structure, may interact with CcsA.

It is found in the plastid. Its subcellular location is the chloroplast thylakoid membrane. Required during biogenesis of c-type cytochromes (cytochrome c6 and cytochrome f) at the step of heme attachment. This chain is Cytochrome c biogenesis protein Ccs1, found in Heterosigma akashiwo (strain NIES-293 / 8280G21-1).